Reading from the N-terminus, the 404-residue chain is Cysteine desulfurase IscS (404 aa).

Residues 75–76 (AT), asparagine 155, glutamine 183, and 203–205 (SGH) each bind pyridoxal 5'-phosphate. Residue lysine 206 is modified to N6-(pyridoxal phosphate)lysine. Threonine 243 contributes to the pyridoxal 5'-phosphate binding site. Cysteine 328 functions as the Cysteine persulfide intermediate in the catalytic mechanism. Cysteine 328 is a [2Fe-2S] cluster binding site.

The protein belongs to the class-V pyridoxal-phosphate-dependent aminotransferase family. NifS/IscS subfamily. Homodimer. Forms a heterotetramer with IscU, interacts with other sulfur acceptors. The cofactor is pyridoxal 5'-phosphate.

It localises to the cytoplasm. The enzyme catalyses (sulfur carrier)-H + L-cysteine = (sulfur carrier)-SH + L-alanine. It functions in the pathway cofactor biosynthesis; iron-sulfur cluster biosynthesis. Master enzyme that delivers sulfur to a number of partners involved in Fe-S cluster assembly, tRNA modification or cofactor biosynthesis. Catalyzes the removal of elemental sulfur atoms from cysteine to produce alanine. Functions as a sulfur delivery protein for Fe-S cluster synthesis onto IscU, an Fe-S scaffold assembly protein, as well as other S acceptor proteins. In Klebsiella pneumoniae subsp. pneumoniae (strain ATCC 700721 / MGH 78578), this protein is Cysteine desulfurase IscS.